Consider the following 91-residue polypeptide: Small ribosomal subunit protein uS19 (91 aa).

Belongs to the universal ribosomal protein uS19 family.

Its function is as follows. Protein S19 forms a complex with S13 that binds strongly to the 16S ribosomal RNA. This Synechococcus elongatus (strain ATCC 33912 / PCC 7942 / FACHB-805) (Anacystis nidulans R2) protein is Small ribosomal subunit protein uS19.